Reading from the N-terminus, the 1914-residue chain is Fatty acid synthase beta subunit stcK (1914 aa).

An acetyltransferase (AT) domain region spans residues 17 to 395; the sequence is LYACFGGQGP…LEGTGMNVVN (379 aa). The enoyl reductase (ER) domain stretch occupies residues 446-692; sequence TRLLGTPHVM…LIVEAPGVKD (247 aa). The tract at residues 1009–1509 is dehydratase (DH) domain; that stretch reads GECAWGYAAL…RANDRLRMEI (501 aa). One can recognise a MaoC-like domain in the interval 1398 to 1532; sequence FLNRHGAPRV…VRVLKESTGE (135 aa). Residues 1548–1900 form a malonyl/palmitoyl transferase (MT/PT) domain region; the sequence is YVFTGQGTQE…IRLVQGVTQS (353 aa).

The protein belongs to the fungal fatty acid synthetase subunit beta family. [Alpha(6)beta(6)] hexamers of two multifunctional subunits (alpha and beta).

It carries out the reaction acetyl-CoA + n malonyl-CoA + 2n NADPH + 4n H(+) = a long-chain-acyl-CoA + n CoA + n CO2 + 2n NADP(+).. It catalyses the reaction holo-[ACP] + acetyl-CoA = acetyl-[ACP] + CoA. The catalysed reaction is holo-[ACP] + malonyl-CoA = malonyl-[ACP] + CoA. The enzyme catalyses a (3R)-hydroxyacyl-[ACP] = a (2E)-enoyl-[ACP] + H2O. It carries out the reaction a 2,3-saturated acyl-[ACP] + NAD(+) = a (2E)-enoyl-[ACP] + NADH + H(+). It catalyses the reaction (9Z)-octadecenoyl-[ACP] + H2O = (9Z)-octadecenoate + holo-[ACP] + H(+). Its pathway is mycotoxin biosynthesis; sterigmatocystin biosynthesis. Its function is as follows. Fatty acid synthase beta subunit; part of the gene cluster that mediates the biosynthesis of sterigmatocystin (ST), a polyketide-derived furanocoumarin which is part of the most toxic and carcinogenic compounds among the known mycotoxins. The first step in the biosynthesis of sterigmatocystin is the production of hexanoate by the fatty acid synthase (FAS) units stcJ and stcK. The polyketide backbone is assembled by the non-reducing polyketide synthase stcA by condensation of the starter hexanoyl-CoA and 7 malonyl-CoA extender units followed by cyclization and release of norsolorinic acid. Norsolorinic acid is the first stable intermediate in the biosynthesis of sterigmatocystin and is converted into averantin (AVN) by the ketoreductase stcE which reduces the hexanoate ketone to an alcohol. Averantin is then oxidized into 5'-hydroxyaverantin (HAVN) by the cytochrome P450 monooxygenase stcF. 5'-hydroxyaverantin is further converted to 5'-oxyaverantin (OAVN) by the 5'-hydroxyaverantin dehydrogenase stcG. The next step is the conversion of OAVN into averufin (AVF) which is catalyzed by a yet to be identified enzyme. The cytochrome P450 monooxygenase stcB and the flavin-binding monooxygenase stcW are both required for the conversion of averufin to 1-hydroxyversicolorone. The esterase stcI probably catalyzes the formation of versiconal hemiacetal acetate from 1-hydroxyversicolorone. The oxydoreductase stcN then probably catalyzes the biosynthetic step from versiconal to versicolorin B (VERB). The next step is performed by the versicolorin B desaturase stcL to produce versicolorin A (VERA). The ketoreductase stcU and the cytochrome P450 monooxygenase stcS are involved in the conversion of versicolorin A to demethylsterigmatocystin. The Baeyer-Villiger oxidas stcQ and the reductase stcR might be involved in the biosynthetic step from versicolorin A to demethylsterigmatocystin. The final step in the biosynthesis of sterigmatocystin is the methylation of demethylsterigmatocystin catalyzed by the methyltransferase stcP. This chain is Fatty acid synthase beta subunit stcK, found in Emericella nidulans (strain FGSC A4 / ATCC 38163 / CBS 112.46 / NRRL 194 / M139) (Aspergillus nidulans).